The primary structure comprises 712 residues: Polyribonucleotide nucleotidyltransferase (712 aa).

The Mg(2+) site is built by Asp493 and Asp499. A KH domain is found at 560–619 (PRLLTFKVDPEDIGKIIGPGGKMVRSITEATGAKVDISDDGTITVSSSVGGQAEAARAMI). Positions 629–697 (GQVYLGKVTR…HKGRVNLTRL (69 aa)) constitute an S1 motif domain.

This sequence belongs to the polyribonucleotide nucleotidyltransferase family. Mg(2+) is required as a cofactor.

It is found in the cytoplasm. It carries out the reaction RNA(n+1) + phosphate = RNA(n) + a ribonucleoside 5'-diphosphate. Functionally, involved in mRNA degradation. Catalyzes the phosphorolysis of single-stranded polyribonucleotides processively in the 3'- to 5'-direction. In Synechococcus sp. (strain JA-3-3Ab) (Cyanobacteria bacterium Yellowstone A-Prime), this protein is Polyribonucleotide nucleotidyltransferase.